A 118-amino-acid chain; its full sequence is Ribosome-binding factor A (118 aa).

The protein belongs to the RbfA family. In terms of assembly, monomer. Binds 30S ribosomal subunits, but not 50S ribosomal subunits or 70S ribosomes.

Its subcellular location is the cytoplasm. Its function is as follows. One of several proteins that assist in the late maturation steps of the functional core of the 30S ribosomal subunit. Associates with free 30S ribosomal subunits (but not with 30S subunits that are part of 70S ribosomes or polysomes). Required for efficient processing of 16S rRNA. May interact with the 5'-terminal helix region of 16S rRNA. The sequence is that of Ribosome-binding factor A from Bacillus thuringiensis (strain Al Hakam).